The primary structure comprises 117 residues: U9-theraphotoxin-Hhn1a (117 aa).

Positions methionine 1–alanine 21 are cleaved as a signal peptide. A propeptide spanning residues aspartate 22–arginine 75 is cleaved from the precursor. Cystine bridges form between cysteine 76–cysteine 94, cysteine 83–cysteine 99, and cysteine 93–cysteine 114.

This sequence belongs to the neurotoxin 14 (magi-1) family. 01 (HNTX-16) subfamily. As to expression, expressed by the venom gland.

Its subcellular location is the secreted. Probable ion channel inhibitor. This is U9-theraphotoxin-Hhn1a from Cyriopagopus hainanus (Chinese bird spider).